The primary structure comprises 290 residues: Ribosomal RNA small subunit methyltransferase A (290 aa).

Residues Asn27, Leu29, Gly54, Glu75, Asp100, and Asn125 each contribute to the S-adenosyl-L-methionine site.

This sequence belongs to the class I-like SAM-binding methyltransferase superfamily. rRNA adenine N(6)-methyltransferase family. RsmA subfamily.

Its subcellular location is the cytoplasm. It catalyses the reaction adenosine(1518)/adenosine(1519) in 16S rRNA + 4 S-adenosyl-L-methionine = N(6)-dimethyladenosine(1518)/N(6)-dimethyladenosine(1519) in 16S rRNA + 4 S-adenosyl-L-homocysteine + 4 H(+). In terms of biological role, specifically dimethylates two adjacent adenosines (A1518 and A1519) in the loop of a conserved hairpin near the 3'-end of 16S rRNA in the 30S particle. May play a critical role in biogenesis of 30S subunits. The protein is Ribosomal RNA small subunit methyltransferase A of Streptococcus equi subsp. zooepidemicus (strain H70).